The chain runs to 282 residues: 2-dehydro-3-deoxyphosphooctonate aldolase (282 aa).

The protein belongs to the KdsA family.

The protein localises to the cytoplasm. The catalysed reaction is D-arabinose 5-phosphate + phosphoenolpyruvate + H2O = 3-deoxy-alpha-D-manno-2-octulosonate-8-phosphate + phosphate. Its pathway is carbohydrate biosynthesis; 3-deoxy-D-manno-octulosonate biosynthesis; 3-deoxy-D-manno-octulosonate from D-ribulose 5-phosphate: step 2/3. The protein operates within bacterial outer membrane biogenesis; lipopolysaccharide biosynthesis. In Shewanella halifaxensis (strain HAW-EB4), this protein is 2-dehydro-3-deoxyphosphooctonate aldolase.